The primary structure comprises 206 residues: tRNA (guanine-N(7)-)-methyltransferase (206 aa).

S-adenosyl-L-methionine is bound by residues Glu37, Glu62, Asp89, and Asp112. Residue Asp112 is part of the active site. Residues Lys116 and Asp148 each coordinate substrate.

Belongs to the class I-like SAM-binding methyltransferase superfamily. TrmB family.

The enzyme catalyses guanosine(46) in tRNA + S-adenosyl-L-methionine = N(7)-methylguanosine(46) in tRNA + S-adenosyl-L-homocysteine. It participates in tRNA modification; N(7)-methylguanine-tRNA biosynthesis. In terms of biological role, catalyzes the formation of N(7)-methylguanine at position 46 (m7G46) in tRNA. The sequence is that of tRNA (guanine-N(7)-)-methyltransferase from Myxococcus xanthus (strain DK1622).